The chain runs to 177 residues: Adenine phosphoribosyltransferase (177 aa).

This sequence belongs to the purine/pyrimidine phosphoribosyltransferase family. Homodimer.

The protein localises to the cytoplasm. The enzyme catalyses AMP + diphosphate = 5-phospho-alpha-D-ribose 1-diphosphate + adenine. Its pathway is purine metabolism; AMP biosynthesis via salvage pathway; AMP from adenine: step 1/1. In terms of biological role, catalyzes a salvage reaction resulting in the formation of AMP, that is energically less costly than de novo synthesis. In Leptospira interrogans serogroup Icterohaemorrhagiae serovar copenhageni (strain Fiocruz L1-130), this protein is Adenine phosphoribosyltransferase.